The following is a 208-amino-acid chain: FMN-dependent NADH:quinone oxidoreductase 1 (208 aa).

Belongs to the azoreductase type 1 family. Homodimer. FMN is required as a cofactor.

It carries out the reaction 2 a quinone + NADH + H(+) = 2 a 1,4-benzosemiquinone + NAD(+). The catalysed reaction is N,N-dimethyl-1,4-phenylenediamine + anthranilate + 2 NAD(+) = 2-(4-dimethylaminophenyl)diazenylbenzoate + 2 NADH + 2 H(+). Quinone reductase that provides resistance to thiol-specific stress caused by electrophilic quinones. Its function is as follows. Also exhibits azoreductase activity. Catalyzes the reductive cleavage of the azo bond in aromatic azo compounds to the corresponding amines. This Bacillus cereus (strain ATCC 14579 / DSM 31 / CCUG 7414 / JCM 2152 / NBRC 15305 / NCIMB 9373 / NCTC 2599 / NRRL B-3711) protein is FMN-dependent NADH:quinone oxidoreductase 1.